The sequence spans 652 residues: Carboxypeptidase S1 homolog A (652 aa).

A signal peptide spans 1–19 (MRLAASIAVALPVIGAASA). A disulfide bond links Cys-50 and Cys-121. 6 N-linked (GlcNAc...) asparagine glycosylation sites follow: Asn-77, Asn-132, Asn-161, Asn-168, Asn-184, and Asn-202. The active site involves Ser-238. Residues Asn-260, Asn-299, Asn-347, and Asn-410 are each glycosylated (N-linked (GlcNAc...) asparagine). Disulfide bonds link Cys-325-Cys-361 and Cys-332-Cys-354. Asp-458 is an active-site residue. Position 461 (Cys-461) interacts with substrate. N-linked (GlcNAc...) asparagine glycans are attached at residues Asn-474, Asn-492, and Asn-505. Residue His-516 is part of the active site. Glu-517 is a substrate binding site. Asn-594 is a glycosylation site (N-linked (GlcNAc...) asparagine). Positions 608 to 628 (AASKGNPPPTTTSSPTASPTA) are disordered. Residues 618–628 (TTSSPTASPTA) show a composition bias toward low complexity. Gly-629 carries the GPI-anchor amidated glycine lipid modification. A propeptide spans 630–652 (SAMLKAPVAMLAISALTVLAFYL) (removed in mature form).

The protein belongs to the peptidase S10 family.

It is found in the cell membrane. The enzyme catalyses Preferential release of a C-terminal arginine or lysine residue.. In terms of biological role, extracellular serine carboxypeptidase that contributes to pathogenicity. The protein is Carboxypeptidase S1 homolog A (SCPA) of Arthroderma benhamiae (strain ATCC MYA-4681 / CBS 112371) (Trichophyton mentagrophytes).